The chain runs to 355 residues: uncharacterized protein (355 aa).

An N-terminal signal peptide occupies residues 1–21 (MQKKVLFNDIVFVCFPITDNG). 6 N-linked (GlcNAc...) asparagine; by host glycosylation sites follow: Asn-20, Asn-78, Asn-87, Asn-156, Asn-159, and Asn-274. Topologically, residues 22 to 331 (SIIISDIGYS…SSTSFFSRYG (310 aa)) are virion surface. The tract at residues 288–317 (GSKSTPNGPNGPTPTPSNGPNGPTPVPGIP) is disordered. Over residues 296–317 (PNGPTPTPSNGPNGPTPVPGIP) the composition is skewed to pro residues. An N-linked (GlcNAc...) asparagine; by host glycan is attached at Asn-320. Residues 332 to 352 (LWIIIAIILLIVIISAVGIYF) traverse the membrane as a helical segment. Residues 353 to 355 (YLR) lie on the Intravirion side of the membrane.

The protein localises to the host membrane. It is found in the virion. This is an uncharacterized protein from Acanthamoeba polyphaga mimivirus (APMV).